Here is a 274-residue protein sequence, read N- to C-terminus: Large ribosomal subunit protein uL2 (274 aa).

Disordered stretches follow at residues 28–53 and 223–274; these read APYA…TVRH and VAMN…RRNK. Low complexity predominate over residues 39 to 48; sequence KSGGRNNNGR.

This sequence belongs to the universal ribosomal protein uL2 family. Part of the 50S ribosomal subunit. Forms a bridge to the 30S subunit in the 70S ribosome.

In terms of biological role, one of the primary rRNA binding proteins. Required for association of the 30S and 50S subunits to form the 70S ribosome, for tRNA binding and peptide bond formation. It has been suggested to have peptidyltransferase activity; this is somewhat controversial. Makes several contacts with the 16S rRNA in the 70S ribosome. This is Large ribosomal subunit protein uL2 from Pseudoalteromonas atlantica (strain T6c / ATCC BAA-1087).